Consider the following 350-residue polypeptide: Purine-rich element-binding protein gamma (350 aa).

Disordered stretches follow at residues 1–59 (MERA…GTSE) and 136–172 (GHRQ…HPHS). A compositionally biased stretch (gly residues) spans 9 to 27 (GGGSGGGRGRGGKNVGGPG). Over residues 47 to 59 (ASATPNQSGGTSE) the composition is skewed to polar residues. Residues 54–296 (SGGTSEIQEL…GIFLKVSEVR (243 aa)) mediate DNA binding. A compositionally biased stretch (basic and acidic residues) spans 137-149 (HRQEHGQSKEQVS). Residues Ser163, Ser166, and Ser342 each carry the phosphoserine modification.

It belongs to the PUR DNA-binding protein family. Isoform 1 is expressed in testis. Isoform 2 is expressed in blastocyst and kidney.

It localises to the nucleus. The protein is Purine-rich element-binding protein gamma (Purg) of Mus musculus (Mouse).